The primary structure comprises 179 residues: Segregation and condensation protein B (179 aa).

The protein belongs to the ScpB family. In terms of assembly, homodimer. Homodimerization may be required to stabilize the binding of ScpA to the Smc head domains. Component of a cohesin-like complex composed of ScpA, ScpB and the Smc homodimer, in which ScpA and ScpB bind to the head domain of Smc. The presence of the three proteins is required for the association of the complex with DNA.

The protein localises to the cytoplasm. Functionally, participates in chromosomal partition during cell division. May act via the formation of a condensin-like complex containing Smc and ScpA that pull DNA away from mid-cell into both cell halves. This chain is Segregation and condensation protein B, found in Streptococcus equi subsp. zooepidemicus (strain H70).